Reading from the N-terminus, the 288-residue chain is Acetyl-coenzyme A carboxylase carboxyl transferase subunit beta (288 aa).

Residues 32–288 form the CoA carboxyltransferase N-terminal domain; it reads LLLICPKCKK…ILMLHNVEAR (257 aa). 4 residues coordinate Zn(2+): C36, C39, C55, and C58. Residues 36–58 form a C4-type zinc finger; the sequence is CPKCKKTLLKSELADNLDVCREC.

It belongs to the AccD/PCCB family. Acetyl-CoA carboxylase is a heterohexamer composed of biotin carboxyl carrier protein (AccB), biotin carboxylase (AccC) and two subunits each of ACCase subunit alpha (AccA) and ACCase subunit beta (AccD). Requires Zn(2+) as cofactor.

The protein localises to the cytoplasm. The catalysed reaction is N(6)-carboxybiotinyl-L-lysyl-[protein] + acetyl-CoA = N(6)-biotinyl-L-lysyl-[protein] + malonyl-CoA. It participates in lipid metabolism; malonyl-CoA biosynthesis; malonyl-CoA from acetyl-CoA: step 1/1. Functionally, component of the acetyl coenzyme A carboxylase (ACC) complex. Biotin carboxylase (BC) catalyzes the carboxylation of biotin on its carrier protein (BCCP) and then the CO(2) group is transferred by the transcarboxylase to acetyl-CoA to form malonyl-CoA. This Ruminiclostridium cellulolyticum (strain ATCC 35319 / DSM 5812 / JCM 6584 / H10) (Clostridium cellulolyticum) protein is Acetyl-coenzyme A carboxylase carboxyl transferase subunit beta.